The sequence spans 293 residues: Lymphocyte antigen 6 complex locus protein G6f (293 aa).

The first 19 residues, 1–19 (MAMVVFLLLYLCGHPQAAA), serve as a signal peptide directing secretion. Residues 20–124 (DNIQTLYVPS…HKYQNWRVYD (105 aa)) form the Ig-like V-type domain. Over 20-237 (DNIQTLYVPS…APLPSWDVSW (218 aa)) the chain is Extracellular. A disulfide bridge links Cys37 with Cys108. Asn90 is a glycosylation site (N-linked (GlcNAc...) asparagine). Residues 238-258 (ILMLLFAAGQGVTIIALSIVI) traverse the membrane as a helical segment. Topologically, residues 259 to 293 (WRHQRAQGTQDREPSIPHFKPEVQVYENIHLARLR) are cytoplasmic. Tyr284 is subject to Phosphotyrosine.

In terms of assembly, homodimer; disulfide-linked. Interacts with GRB2 and GRB7 in a phosphorylation-dependent manner. In terms of processing, N-glycosylated.

The protein resides in the cell membrane. In terms of biological role, may play a role in the downstream signal transduction pathways involving GRB2 and GRB7. This is Lymphocyte antigen 6 complex locus protein G6f (Ly6g6f) from Rattus norvegicus (Rat).